The following is a 305-amino-acid chain: Acetyl-coenzyme A carboxylase carboxyl transferase subunit beta (305 aa).

The 270-residue stretch at 27-296 folds into the CoA carboxyltransferase N-terminal domain; it reads LWVKCSACRE…PAAKADLAAR (270 aa). Zn(2+) contacts are provided by Cys-31, Cys-34, Cys-50, and Cys-53. The C4-type zinc-finger motif lies at 31 to 53; sequence CSACRELIYKKQLNDNLKVCPKC.

The protein belongs to the AccD/PCCB family. Acetyl-CoA carboxylase is a heterohexamer composed of biotin carboxyl carrier protein (AccB), biotin carboxylase (AccC) and two subunits each of ACCase subunit alpha (AccA) and ACCase subunit beta (AccD). It depends on Zn(2+) as a cofactor.

It localises to the cytoplasm. It carries out the reaction N(6)-carboxybiotinyl-L-lysyl-[protein] + acetyl-CoA = N(6)-biotinyl-L-lysyl-[protein] + malonyl-CoA. It functions in the pathway lipid metabolism; malonyl-CoA biosynthesis; malonyl-CoA from acetyl-CoA: step 1/1. Its function is as follows. Component of the acetyl coenzyme A carboxylase (ACC) complex. Biotin carboxylase (BC) catalyzes the carboxylation of biotin on its carrier protein (BCCP) and then the CO(2) group is transferred by the transcarboxylase to acetyl-CoA to form malonyl-CoA. This Chloroflexus aggregans (strain MD-66 / DSM 9485) protein is Acetyl-coenzyme A carboxylase carboxyl transferase subunit beta.